Consider the following 330-residue polypeptide: Endo-1,4-beta-xylanase (330 aa).

Residues 2 to 330 (CSSIPSLREV…KPAFWRVVNI (329 aa)) enclose the GH10 domain. Glu133 functions as the Proton donor in the catalytic mechanism. Glu240 serves as the catalytic Nucleophile.

The protein belongs to the glycosyl hydrolase 10 (cellulase F) family. Cytoplasmic xylanase subfamily.

Its subcellular location is the cytoplasm. The enzyme catalyses Endohydrolysis of (1-&gt;4)-beta-D-xylosidic linkages in xylans.. The protein operates within glycan degradation; xylan degradation. The polypeptide is Endo-1,4-beta-xylanase (xynA) (Geobacillus stearothermophilus (Bacillus stearothermophilus)).